Reading from the N-terminus, the 183-residue chain is TATA-box-binding protein (183 aa).

A run of 2 repeats spans residues 8-84 (VENI…VDKI) and 99-175 (IQNI…KERL).

It belongs to the TBP family.

Functionally, general factor that plays a role in the activation of archaeal genes transcribed by RNA polymerase. Binds specifically to the TATA box promoter element which lies close to the position of transcription initiation. The protein is TATA-box-binding protein of Methanosphaera stadtmanae (strain ATCC 43021 / DSM 3091 / JCM 11832 / MCB-3).